The chain runs to 434 residues: Beta-enolase (434 aa).

A2 is modified (N-acetylalanine). T72 carries the phosphothreonine modification. Phosphoserine is present on residues S83 and S157. Residues H158 and E167 each contribute to the substrate site. S176 carries the phosphoserine modification. Position 205 is a phosphothreonine (T205). Residue E210 is the Proton donor of the active site. T229 is modified (phosphothreonine). At Y236 the chain carries Phosphotyrosine. D245 contributes to the Mg(2+) binding site. A Phosphoserine modification is found at S263. Residues E293 and D318 each coordinate substrate. Mg(2+) contacts are provided by E293 and D318. K343 acts as the Proton acceptor in catalysis. Residues 370–373 (SHRS) and K394 contribute to the substrate site.

This sequence belongs to the enolase family. In terms of assembly, mammalian enolase is composed of 3 isozyme subunits, alpha, beta and gamma, which can form homodimers or heterodimers which are cell-type and development-specific. In vitro, interacts with several glycolytic enzymes including PKM, PGM, CKM and ALDO. Also binds PLG and troponin, in vitro. Interacts with PNKD. Mg(2+) serves as cofactor. In terms of tissue distribution, brain (at protein level). The alpha/alpha homodimer is expressed in embryo and in most adult tissues. The alpha/beta heterodimer and the beta/beta homodimer are found in striated muscle, and the alpha/gamma heterodimer and the gamma/gamma homodimer in neurons. In striated muscle, the fiber-type order of ENO3 expression is IIB &gt; IIX &gt; IIA &gt; I.

The protein resides in the cytoplasm. It catalyses the reaction (2R)-2-phosphoglycerate = phosphoenolpyruvate + H2O. It participates in carbohydrate degradation; glycolysis; pyruvate from D-glyceraldehyde 3-phosphate: step 4/5. Functionally, glycolytic enzyme that catalyzes the conversion of 2-phosphoglycerate to phosphoenolpyruvate. Appears to have a function in striated muscle development and regeneration. In Mus musculus (Mouse), this protein is Beta-enolase (Eno3).